Consider the following 337-residue polypeptide: Glyceraldehyde-3-phosphate dehydrogenase (337 aa).

Residues 12 to 13 (RI), aspartate 34, and lysine 79 contribute to the NAD(+) site. Residues 150-152 (SCT), threonine 181, 210-211 (TG), and arginine 233 contribute to the D-glyceraldehyde 3-phosphate site. Cysteine 151 acts as the Nucleophile in catalysis. An NAD(+)-binding site is contributed by asparagine 315.

Belongs to the glyceraldehyde-3-phosphate dehydrogenase family. As to quaternary structure, homotetramer.

It is found in the cytoplasm. It carries out the reaction D-glyceraldehyde 3-phosphate + phosphate + NAD(+) = (2R)-3-phospho-glyceroyl phosphate + NADH + H(+). The protein operates within carbohydrate degradation; glycolysis; pyruvate from D-glyceraldehyde 3-phosphate: step 1/5. The sequence is that of Glyceraldehyde-3-phosphate dehydrogenase (GPD) from Phanerodontia chrysosporium (White-rot fungus).